Here is a 328-residue protein sequence, read N- to C-terminus: Beta-ketoacyl-[acyl-carrier-protein] synthase III (328 aa).

Residues Cys-122 and His-255 contribute to the active site. The segment at 256–260 (QANIR) is ACP-binding. Asn-285 is an active-site residue.

The protein belongs to the thiolase-like superfamily. FabH family. As to quaternary structure, homodimer.

The protein resides in the cytoplasm. The enzyme catalyses malonyl-[ACP] + acetyl-CoA + H(+) = 3-oxobutanoyl-[ACP] + CO2 + CoA. Its pathway is lipid metabolism; fatty acid biosynthesis. In terms of biological role, catalyzes the condensation reaction of fatty acid synthesis by the addition to an acyl acceptor of two carbons from malonyl-ACP. Catalyzes the first condensation reaction which initiates fatty acid synthesis and may therefore play a role in governing the total rate of fatty acid production. Possesses both acetoacetyl-ACP synthase and acetyl transacylase activities. Its substrate specificity determines the biosynthesis of branched-chain and/or straight-chain of fatty acids. In Janthinobacterium sp. (strain Marseille) (Minibacterium massiliensis), this protein is Beta-ketoacyl-[acyl-carrier-protein] synthase III.